The primary structure comprises 397 residues: Cysteine desulfurase (397 aa).

Pyridoxal 5'-phosphate is bound by residues Asn148, Gln176, and 196–198 (SAH). An N6-(pyridoxal phosphate)lysine modification is found at Lys199. Thr234 lines the pyridoxal 5'-phosphate pocket. Cys321 acts as the Cysteine persulfide intermediate in catalysis. Residue Cys321 participates in [2Fe-2S] cluster binding.

This sequence belongs to the class-V pyridoxal-phosphate-dependent aminotransferase family. NifS/IscS subfamily. Homodimer. The cofactor is pyridoxal 5'-phosphate.

The catalysed reaction is (sulfur carrier)-H + L-cysteine = (sulfur carrier)-SH + L-alanine. Functionally, catalyzes the removal of elemental sulfur atoms from cysteine to produce alanine. Seems to participate in the biosynthesis of the nitrogenase metalloclusters by providing the inorganic sulfur required for the Fe-S core formation. This chain is Cysteine desulfurase, found in Klebsiella pneumoniae.